The chain runs to 664 residues: Serine/threonine-protein kinase PrkC (664 aa).

The Cytoplasmic portion of the chain corresponds to 1-348; the sequence is MIGKIINERY…PKPKKKSTRK (348 aa). A Protein kinase domain is found at 10-271; sequence YKIVDKLGGG…EMKDDLSSVL (262 aa). Residues 16 to 24 and Lys-39 each bind ATP; that span reads LGGGGMSTV. Asp-133 acts as the Proton acceptor in catalysis. A phosphothreonine; by autocatalysis mark is found at Thr-161, Thr-164, and Thr-166. Residues 349–369 traverse the membrane as a helical segment; that stretch reads IVLLSLIFSLLMIALVSFVAM. The Extracellular segment spans residues 370 to 664; sequence AMFGNKYEET…AEKEVSYDDV (295 aa). 3 consecutive PASTA domains span residues 373-440, 441-509, and 510-575; these read GNKY…VISK, GPEK…YESL, and GIKQ…VVSK. The interval 541–565 is disordered; that stretch reads KEEYSDDIDEGDVISQSPKGKSVDE. Over residues 554–565 the composition is skewed to polar residues; it reads ISQSPKGKSVDE.

This sequence belongs to the protein kinase superfamily. Ser/Thr protein kinase family. In terms of assembly, homodimer.

Its subcellular location is the spore membrane. It carries out the reaction L-seryl-[protein] + ATP = O-phospho-L-seryl-[protein] + ADP + H(+). The catalysed reaction is L-threonyl-[protein] + ATP = O-phospho-L-threonyl-[protein] + ADP + H(+). Its function is as follows. Probable protein kinase that is responsible for triggering spore germination in response to muropeptides, signaling bacteria to exit dormancy. PrkC is thus a germination receptor that binds peptidoglycan fragments containing either m-Dpm (meso-diaminopimelate) or L-lys, which act as spore germinants. Probably autophosphorylates and phosphorylates FusA (EF-G, elongation factor G); the latter modification is likely necessary for germination in response to peptidoglycan. This is Serine/threonine-protein kinase PrkC (prkC) from Staphylococcus aureus (strain Newman).